The primary structure comprises 150 residues: Aspartate carbamoyltransferase regulatory chain (150 aa).

4 residues coordinate Zn(2+): C105, C110, C133, and C136.

The protein belongs to the PyrI family. As to quaternary structure, contains catalytic and regulatory chains. Requires Zn(2+) as cofactor.

In terms of biological role, involved in allosteric regulation of aspartate carbamoyltransferase. In Thermococcus sibiricus (strain DSM 12597 / MM 739), this protein is Aspartate carbamoyltransferase regulatory chain.